We begin with the raw amino-acid sequence, 247 residues long: Orotidine 5'-phosphate decarboxylase (247 aa).

Substrate-binding positions include Asp-16, Lys-38, 66–75 (DLKFHDIPNT), Thr-130, Arg-191, Gln-200, Gly-220, and Arg-221. The active-site Proton donor is the Lys-68.

Belongs to the OMP decarboxylase family. Type 1 subfamily. Homodimer.

The enzyme catalyses orotidine 5'-phosphate + H(+) = UMP + CO2. The protein operates within pyrimidine metabolism; UMP biosynthesis via de novo pathway; UMP from orotate: step 2/2. Its function is as follows. Catalyzes the decarboxylation of orotidine 5'-monophosphate (OMP) to uridine 5'-monophosphate (UMP). This Rhodospirillum rubrum (strain ATCC 11170 / ATH 1.1.1 / DSM 467 / LMG 4362 / NCIMB 8255 / S1) protein is Orotidine 5'-phosphate decarboxylase.